The primary structure comprises 1024 residues: Protein tiptop (1024 aa).

Over residues 20-35 (ELTSPRCQSRDSNTSA) the composition is skewed to polar residues. Disordered stretches follow at residues 20 to 40 (ELTS…AGAG) and 138 to 215 (EGEV…ISAD). Acidic residues predominate over residues 159-175 (DDQEEDQEQDQEQEQEQ). The C2H2-type 1 zinc finger occupies 317–341 (FKCVWCKQSFSTLANLTAHMKETQH). Residues 350-392 (LPTGGVGTPSAPPPTRLATSASNSACSSSSSSTSSSSNSSKSE) form a disordered region. Residues 368–391 (TSASNSACSSSSSSTSSSSNSSKS) show a composition bias toward low complexity. Residues 426–450 (LKCMWCGQSFRSLAEMTSHMQETQH) form a C2H2-type 2 zinc finger. 5 disordered regions span residues 466-489 (GDER…SSPS), 519-576 (AQKS…SLDS), 712-759 (SRDR…IKAE), 786-818 (FSME…SLLA), and 868-891 (ETTD…ASAT). A compositionally biased stretch (low complexity) spans 477-489 (VPSTSTAAPSSPS). The C2H2-type 3 zinc finger occupies 499 to 523 (LTCKVCDQAFGSLKELSTHMAQKSH). The segment covering 527–537 (SPAPSASPPAA) has biased composition (low complexity). The span at 543–558 (KRGRQNRNEKRKKSLP) shows a compositional bias: basic residues. The segment covering 718–729 (SESSSASRVESS) has biased composition (low complexity). Residues 745-755 (TPAPPPPPPPT) show a composition bias toward pro residues. Positions 786-795 (FSMEACRESP) are enriched in basic and acidic residues. Polar residues predominate over residues 796-808 (RSVSKSPAPQTER). Positions 874–891 (STGLRSASSAGSSTASAT) are enriched in low complexity. The segment at 926 to 949 (IKCSYCDTPFASKGAYRHHLSKVH) adopts a C2H2-type 4 zinc-finger fold. Positions 954–1004 (AGEDSPRLKSPAVQSPRSMPLASPRRSASRSPATGSQQPPPSPTISPYDES) are disordered. The span at 968–990 (SPRSMPLASPRRSASRSPATGSQ) shows a compositional bias: low complexity.

Belongs to the teashirt C2H2-type zinc-finger protein family. In terms of tissue distribution, expression in the Malpighian tubules (MTs) and stomatogastric nervous system starts at embryonic stage 10. At stage 11, expression in the head domain is initiated in the clypeolabrum in two bilaterally symmetric clusters of cells. At stage 12, expression appears in the central nervous system (CNS) of the trunk and the epidermis. The staining in the hindgut is maintained throughout embryogenesis. At stage 13, expression is present in elongating MTs. The anterior staining is detected in cells that invaginate into the stomodeum and by stage 15 onwards, in cells close to the pharynx. Also expressed in cells of the brain, the second constriction of the gut, the trunk epidermis, the anterior segments of the CNS (the three thoracic and the first two abdominal segments) and in the MTs. From stage 12 onwards, tsh and tio are colocalized in some cells.

The protein localises to the nucleus. In terms of biological role, tiptop (tio) and teashirt (tsh) have, on the whole, common activities. Tio and tsh repress each other's expression and tsh has a crucial role for trunk patterning that is in part masked by ectopic expression of tiptop. Both genes share a common activity required for the activation of Ser and svb and the maintenance of en and wg. In Drosophila melanogaster (Fruit fly), this protein is Protein tiptop (tio).